Reading from the N-terminus, the 41-residue chain is Large ribosomal subunit protein bL36 (41 aa).

The protein belongs to the bacterial ribosomal protein bL36 family.

This chain is Large ribosomal subunit protein bL36, found in Pelagibacter ubique (strain HTCC1062).